A 332-amino-acid polypeptide reads, in one-letter code: Glycerol-3-phosphate dehydrogenase [NAD(P)+] (332 aa).

Trp-13, Lys-34, and Lys-108 together coordinate NADPH. Residues Lys-108, Gly-136, and Ser-138 each coordinate sn-glycerol 3-phosphate. Ala-140 contributes to the NADPH binding site. Lys-191, Asp-244, Ser-254, Arg-255, and Asn-256 together coordinate sn-glycerol 3-phosphate. Lys-191 (proton acceptor) is an active-site residue. Position 255 (Arg-255) interacts with NADPH. NADPH-binding residues include Val-279 and Glu-281.

Belongs to the NAD-dependent glycerol-3-phosphate dehydrogenase family.

It localises to the cytoplasm. It carries out the reaction sn-glycerol 3-phosphate + NAD(+) = dihydroxyacetone phosphate + NADH + H(+). The catalysed reaction is sn-glycerol 3-phosphate + NADP(+) = dihydroxyacetone phosphate + NADPH + H(+). Its pathway is membrane lipid metabolism; glycerophospholipid metabolism. Its function is as follows. Catalyzes the reduction of the glycolytic intermediate dihydroxyacetone phosphate (DHAP) to sn-glycerol 3-phosphate (G3P), the key precursor for phospholipid synthesis. The chain is Glycerol-3-phosphate dehydrogenase [NAD(P)+] from Francisella tularensis subsp. holarctica (strain FTNF002-00 / FTA).